Reading from the N-terminus, the 256-residue chain is Small ribosomal subunit protein eS1 (256 aa).

Ala2 carries the post-translational modification N-acetylalanine; partial.

Belongs to the eukaryotic ribosomal protein eS1 family. In terms of assembly, component of the small ribosomal subunit. Mature ribosomes consist of a small (40S) and a large (60S) subunit. The 40S subunit contains about 33 different proteins and 1 molecule of RNA (18S). The 60S subunit contains about 49 different proteins and 3 molecules of RNA (25S, 5.8S and 5S).

The protein localises to the cytoplasm. This is Small ribosomal subunit protein eS1 from Lentinula edodes (Shiitake mushroom).